The following is a 276-amino-acid chain: 4-hydroxy-3-methylbut-2-enyl diphosphate reductase (276 aa).

A [4Fe-4S] cluster-binding site is contributed by C12. (2E)-4-hydroxy-3-methylbut-2-enyl diphosphate contacts are provided by H36 and H70. H36 and H70 together coordinate dimethylallyl diphosphate. The isopentenyl diphosphate site is built by H36 and H70. C92 provides a ligand contact to [4Fe-4S] cluster. Position 120 (H120) interacts with (2E)-4-hydroxy-3-methylbut-2-enyl diphosphate. H120 contributes to the dimethylallyl diphosphate binding site. H120 is a binding site for isopentenyl diphosphate. Catalysis depends on E122, which acts as the Proton donor. Residue T158 coordinates (2E)-4-hydroxy-3-methylbut-2-enyl diphosphate. Residue C186 coordinates [4Fe-4S] cluster. S214, S215, N216, and S258 together coordinate (2E)-4-hydroxy-3-methylbut-2-enyl diphosphate. The dimethylallyl diphosphate site is built by S214, S215, N216, and S258. Positions 214, 215, 216, and 258 each coordinate isopentenyl diphosphate.

The protein belongs to the IspH family. [4Fe-4S] cluster serves as cofactor.

It catalyses the reaction isopentenyl diphosphate + 2 oxidized [2Fe-2S]-[ferredoxin] + H2O = (2E)-4-hydroxy-3-methylbut-2-enyl diphosphate + 2 reduced [2Fe-2S]-[ferredoxin] + 2 H(+). The enzyme catalyses dimethylallyl diphosphate + 2 oxidized [2Fe-2S]-[ferredoxin] + H2O = (2E)-4-hydroxy-3-methylbut-2-enyl diphosphate + 2 reduced [2Fe-2S]-[ferredoxin] + 2 H(+). It participates in isoprenoid biosynthesis; dimethylallyl diphosphate biosynthesis; dimethylallyl diphosphate from (2E)-4-hydroxy-3-methylbutenyl diphosphate: step 1/1. Its pathway is isoprenoid biosynthesis; isopentenyl diphosphate biosynthesis via DXP pathway; isopentenyl diphosphate from 1-deoxy-D-xylulose 5-phosphate: step 6/6. Functionally, catalyzes the conversion of 1-hydroxy-2-methyl-2-(E)-butenyl 4-diphosphate (HMBPP) into a mixture of isopentenyl diphosphate (IPP) and dimethylallyl diphosphate (DMAPP). Acts in the terminal step of the DOXP/MEP pathway for isoprenoid precursor biosynthesis. This Wolinella succinogenes (strain ATCC 29543 / DSM 1740 / CCUG 13145 / JCM 31913 / LMG 7466 / NCTC 11488 / FDC 602W) (Vibrio succinogenes) protein is 4-hydroxy-3-methylbut-2-enyl diphosphate reductase.